We begin with the raw amino-acid sequence, 324 residues long: Biotin synthase (324 aa).

The region spanning 50-278 (HAGPAFTCAI…QADILVAGGR (229 aa)) is the Radical SAM core domain. Residues Cys67, Cys71, and Cys74 each coordinate [4Fe-4S] cluster. The [2Fe-2S] cluster site is built by Cys143 and Cys203.

This sequence belongs to the radical SAM superfamily. Biotin synthase family. In terms of assembly, homodimer. It depends on [4Fe-4S] cluster as a cofactor. Requires [2Fe-2S] cluster as cofactor.

It catalyses the reaction (4R,5S)-dethiobiotin + (sulfur carrier)-SH + 2 reduced [2Fe-2S]-[ferredoxin] + 2 S-adenosyl-L-methionine = (sulfur carrier)-H + biotin + 2 5'-deoxyadenosine + 2 L-methionine + 2 oxidized [2Fe-2S]-[ferredoxin]. It functions in the pathway cofactor biosynthesis; biotin biosynthesis; biotin from 7,8-diaminononanoate: step 2/2. In terms of biological role, catalyzes the conversion of dethiobiotin (DTB) to biotin by the insertion of a sulfur atom into dethiobiotin via a radical-based mechanism. This is Biotin synthase from Oleidesulfovibrio alaskensis (strain ATCC BAA-1058 / DSM 17464 / G20) (Desulfovibrio alaskensis).